The chain runs to 128 residues: Fluoride-specific ion channel FluC (128 aa).

4 helical membrane passes run 5-25 (IVAIFVGAGFGALLRWFLSIG), 35-55 (LGTLASNLIGGYLIGIAVVAF), 67-87 (LFVITGFMGGLTTFSTYSVEV), and 96-116 (FGWALAVAALHLIGSFTLTGL). The Na(+) site is built by Gly-75 and Thr-78.

The protein belongs to the fluoride channel Fluc/FEX (TC 1.A.43) family.

The protein localises to the cell inner membrane. It catalyses the reaction fluoride(in) = fluoride(out). Na(+) is not transported, but it plays an essential structural role and its presence is essential for fluoride channel function. Its function is as follows. Fluoride-specific ion channel. Important for reducing fluoride concentration in the cell, thus reducing its toxicity. The sequence is that of Fluoride-specific ion channel FluC from Burkholderia mallei (strain NCTC 10247).